The following is a 473-amino-acid chain: Glutamate--tRNA ligase 1 (473 aa).

A 'HIGH' region motif is present at residues 11-21 (PSPTGFLHIGG). Positions 111-132 (REQARKEGRPPRYDGRWRDRAE) are disordered. Residues 240–244 (KLSKR) carry the 'KMSKS' region motif. Lys-243 is an ATP binding site.

It belongs to the class-I aminoacyl-tRNA synthetase family. Glutamate--tRNA ligase type 1 subfamily. Monomer.

Its subcellular location is the cytoplasm. The catalysed reaction is tRNA(Glu) + L-glutamate + ATP = L-glutamyl-tRNA(Glu) + AMP + diphosphate. Its function is as follows. Catalyzes the attachment of glutamate to tRNA(Glu) in a two-step reaction: glutamate is first activated by ATP to form Glu-AMP and then transferred to the acceptor end of tRNA(Glu). The sequence is that of Glutamate--tRNA ligase 1 from Beijerinckia indica subsp. indica (strain ATCC 9039 / DSM 1715 / NCIMB 8712).